We begin with the raw amino-acid sequence, 303 residues long: Porphobilinogen deaminase (303 aa).

At Cys240 the chain carries S-(dipyrrolylmethanemethyl)cysteine.

The protein belongs to the HMBS family. Monomer. Dipyrromethane serves as cofactor.

It catalyses the reaction 4 porphobilinogen + H2O = hydroxymethylbilane + 4 NH4(+). It participates in porphyrin-containing compound metabolism; protoporphyrin-IX biosynthesis; coproporphyrinogen-III from 5-aminolevulinate: step 2/4. Tetrapolymerization of the monopyrrole PBG into the hydroxymethylbilane pre-uroporphyrinogen in several discrete steps. The chain is Porphobilinogen deaminase from Stenotrophomonas maltophilia (strain R551-3).